The following is a 194-amino-acid chain: 7-methyl-GTP pyrophosphatase (194 aa).

The Proton acceptor role is filled by aspartate 70.

Belongs to the Maf family. YceF subfamily. A divalent metal cation is required as a cofactor.

It localises to the cytoplasm. It catalyses the reaction N(7)-methyl-GTP + H2O = N(7)-methyl-GMP + diphosphate + H(+). In terms of biological role, nucleoside triphosphate pyrophosphatase that hydrolyzes 7-methyl-GTP (m(7)GTP). May have a dual role in cell division arrest and in preventing the incorporation of modified nucleotides into cellular nucleic acids. The protein is 7-methyl-GTP pyrophosphatase of Ralstonia nicotianae (strain ATCC BAA-1114 / GMI1000) (Ralstonia solanacearum).